The sequence spans 137 residues: Large ribosomal subunit protein uL16 (137 aa).

It belongs to the universal ribosomal protein uL16 family. In terms of assembly, part of the 50S ribosomal subunit.

In terms of biological role, binds 23S rRNA and is also seen to make contacts with the A and possibly P site tRNAs. The protein is Large ribosomal subunit protein uL16 of Stenotrophomonas maltophilia (strain K279a).